A 464-amino-acid chain; its full sequence is ERO1-like protein alpha (464 aa).

The first 23 residues, 1–23, serve as a signal peptide directing secretion; that stretch reads MGRAWGLLVGLLGVVWLLRLGHG. 8 disulfide bridges follow: Cys35–Cys48, Cys37–Cys46, Cys85–Cys387, Cys94–Cys99, Cys94–Cys130, Cys99–Cys104, Cys207–Cys237, and Cys390–Cys393. Ser106, Ser142, and Ser144 each carry phosphoserine. Arg186, Thr188, and Trp199 together coordinate FAD. Residues Ser248 and His251 each coordinate FAD. A glycan (N-linked (GlcNAc...) asparagine) is linked at Asn276. Residues Arg283 and Arg296 each contribute to the FAD site. Residue Asn380 is glycosylated (N-linked (GlcNAc...) asparagine).

Belongs to the EROs family. As to quaternary structure, predominantly monomer. May function both as a monomer and a homodimer. Interacts with PDILT. Interacts with ERP44; the interaction results in retention of ERO1A in the endoplasmic reticulum. The cofactor is FAD. N-glycosylated. In terms of processing, the Cys-94/Cys-99 and Cys-390/Cys-393 disulfide bonds constitute the redox-active center. The Cys-94/Cys-99 disulfide bond may accept electron from P4HB and funnel them to the active site disulfide Cys-390/Cys-393. The regulatory Cys-99/Cys-104 disulfide bond stabilizes the other regulatory bond Cys-94/Cys-130. Post-translationally, phosphorylated on Ser-144 by FAM20C in the Golgi which increases its enzymatic activity. Phosphorylation is induced by lactation. It is also induced by hypoxia and reductive stress. Widely expressed (at protein level). In the mammary gland, expressed at higher levels in lactating mice than in virgin mice (at protein level).

It localises to the endoplasmic reticulum membrane. The protein resides in the golgi apparatus lumen. It is found in the secreted. The protein localises to the cell projection. Its subcellular location is the dendrite. Enzyme activity is tightly regulated to prevent the accumulation of reactive oxygen species in the endoplasmic reticulum. Reversibly down-regulated by the formation of disulfide bonds between the active site Cys-94 and Cys-130, and between Cys-99 and Cys-104. Glutathione may be required to regulate its activity in the endoplasmic reticulum. Oxidoreductase involved in disulfide bond formation in the endoplasmic reticulum. Efficiently reoxidizes P4HB/PDI, the enzyme catalyzing protein disulfide formation, in order to allow P4HB to sustain additional rounds of disulfide formation. Following P4HB reoxidation, passes its electrons to molecular oxygen via FAD, leading to the production of reactive oxygen species (ROS) in the cell. Required for the proper folding of immunoglobulins. Plays an important role in ER stress-induced, CHOP-dependent apoptosis by activating the inositol 1,4,5-trisphosphate receptor IP3R1. The sequence is that of ERO1-like protein alpha from Mus musculus (Mouse).